The following is a 165-amino-acid chain: Cytochrome c-type biogenesis protein CcmE (165 aa).

Over 1 to 29 (MSATAEQNARNPKGKGGFARTVSQRKRKR) the chain is Cytoplasmic. A helical; Signal-anchor for type II membrane protein transmembrane segment spans residues 30-50 (LFLIGGALAVLAVAVGLMLTA). Residues 51–165 (FNQDIRFFRT…LKKKGVWEGK (115 aa)) are Periplasmic-facing. Heme-binding residues include His-143 and Tyr-147.

This sequence belongs to the CcmE/CycJ family.

Its subcellular location is the cell inner membrane. Heme chaperone required for the biogenesis of c-type cytochromes. Transiently binds heme delivered by CcmC and transfers the heme to apo-cytochromes in a process facilitated by CcmF and CcmH. The sequence is that of Cytochrome c-type biogenesis protein CcmE from Brucella canis (strain ATCC 23365 / NCTC 10854 / RM-666).